The chain runs to 449 residues: Procollagen C-endopeptidase enhancer 1 (449 aa).

The signal sequence occupies residues 1-25; that stretch reads MLPAATASLLGPLLTACALLPFAQG. The N-linked (GlcNAc...) asparagine glycan is linked to N29. 7 cysteine pairs are disulfide-bonded: C37–C63, C90–C112, C159–C186, C213–C236, C318–C386, C322–C389, and C333–C437. CUB domains follow at residues 37–149 and 159–273; these read CGGD…YSGR and CGGR…YKTL. Position 50 is a phosphoserine (S50). Positions 271–321 are disordered; sequence KTLPRGTAKEGQGPGPKRGTEPKVKLPPKSQPPEKTEESPSAPDAPTCPKQ. An NTR domain is found at 318-437; the sequence is CPKQCRRTGT…ILTNLSKRKC (120 aa). N431 is a glycosylation site (N-linked (GlcNAc...) asparagine).

Interacts with EFEMP2. In terms of processing, C-terminally processed at multiple positions.

It is found in the secreted. In terms of biological role, binds to the C-terminal propeptide of type I procollagen and enhances procollagen C-proteinase activity. Its function is as follows. C-terminal processed part of PCPE (CT-PCPE) may have an metalloproteinase inhibitory activity. The chain is Procollagen C-endopeptidase enhancer 1 (PCOLCE) from Homo sapiens (Human).